A 141-amino-acid chain; its full sequence is Large ribosomal subunit protein uL11 (141 aa).

Belongs to the universal ribosomal protein uL11 family. Part of the ribosomal stalk of the 50S ribosomal subunit. Interacts with L10 and the large rRNA to form the base of the stalk. L10 forms an elongated spine to which L12 dimers bind in a sequential fashion forming a multimeric L10(L12)X complex. In terms of processing, one or more lysine residues are methylated.

Its function is as follows. Forms part of the ribosomal stalk which helps the ribosome interact with GTP-bound translation factors. This is Large ribosomal subunit protein uL11 from Thermotoga sp. (strain RQ2).